A 376-amino-acid chain; its full sequence is Growth/differentiation factor 8 (376 aa).

Residues 1–24 form the signal peptide; it reads MIQKPQMYVYIYLFVLIAAGPVDL. A propeptide spanning residues 25–267 is cleaved from the precursor; the sequence is NEDSEREANV…VTDTPKRSRR (243 aa). Asn72 carries an N-linked (GlcNAc...) asparagine glycan. 4 disulfide bridges follow: Cys273/Cys283, Cys282/Cys341, Cys310/Cys373, and Cys314/Cys375.

The protein belongs to the TGF-beta family. As to quaternary structure, homodimer; disulfide-linked. Interacts with WFIKKN2, leading to inhibit its activity. Interacts with FSTL3. Post-translationally, synthesized as large precursor molecule that undergoes proteolytic cleavage to generate an N-terminal propeptide and a disulfide linked C-terminal dimer, which is the biologically active molecule. The circulating form consists of a latent complex of the C-terminal dimer and other proteins, including its propeptide, which maintain the C-terminal dimer in a latent, inactive state. Ligand activation requires additional cleavage of the prodomain by a tolloid-like metalloproteinase.

It localises to the secreted. Functionally, acts specifically as a negative regulator of skeletal muscle growth. This is Growth/differentiation factor 8 (Mstn) from Rattus norvegicus (Rat).